Consider the following 226-residue polypeptide: ATP synthase F(0) complex subunit a (226 aa).

6 helical membrane passes run 10 to 30 (ITPTLMGLPIIILIIMFPPVI), 68 to 88 (WSLMLASLIIFIGSTNLLGLL), 97 to 117 (QLSMNLGMAIPPWAGAVILGF), 138 to 158 (IPMLVIIETISLFIQPMALAV), 164 to 184 (ITAGHLLMHLIGGATLVLTSI), and 189 to 209 (AMITFIILIMLTILEFAVALI).

This sequence belongs to the ATPase A chain family. As to quaternary structure, component of the ATP synthase complex composed at least of ATP5F1A/subunit alpha, ATP5F1B/subunit beta, ATP5MC1/subunit c (homooctomer), MT-ATP6/subunit a, MT-ATP8/subunit 8, ATP5ME/subunit e, ATP5MF/subunit f, ATP5MG/subunit g, ATP5MK/subunit k, ATP5MJ/subunit j, ATP5F1C/subunit gamma, ATP5F1D/subunit delta, ATP5F1E/subunit epsilon, ATP5PF/subunit F6, ATP5PB/subunit b, ATP5PD/subunit d, ATP5PO/subunit OSCP. ATP synthase complex consists of a soluble F(1) head domain (subunits alpha(3) and beta(3)) - the catalytic core - and a membrane F(0) domain - the membrane proton channel (subunits c, a, 8, e, f, g, k and j). These two domains are linked by a central stalk (subunits gamma, delta, and epsilon) rotating inside the F1 region and a stationary peripheral stalk (subunits F6, b, d, and OSCP). Interacts with DNAJC30; interaction is direct.

It localises to the mitochondrion inner membrane. It carries out the reaction H(+)(in) = H(+)(out). Subunit a, of the mitochondrial membrane ATP synthase complex (F(1)F(0) ATP synthase or Complex V) that produces ATP from ADP in the presence of a proton gradient across the membrane which is generated by electron transport complexes of the respiratory chain. ATP synthase complex consist of a soluble F(1) head domain - the catalytic core - and a membrane F(1) domain - the membrane proton channel. These two domains are linked by a central stalk rotating inside the F(1) region and a stationary peripheral stalk. During catalysis, ATP synthesis in the catalytic domain of F(1) is coupled via a rotary mechanism of the central stalk subunits to proton translocation. With the subunit c (ATP5MC1), forms the proton-conducting channel in the F(0) domain, that contains two crucial half-channels (inlet and outlet) that facilitate proton movement from the mitochondrial intermembrane space (IMS) into the matrix. Protons are taken up via the inlet half-channel and released through the outlet half-channel, following a Grotthuss mechanism. The sequence is that of ATP synthase F(0) complex subunit a from Cricetulus griseus (Chinese hamster).